Here is a 137-residue protein sequence, read N- to C-terminus: Small ribosomal subunit protein uS9 (137 aa).

The interval 104-137 is disordered; the sequence is PLKSEGYLTRDPRAKERKKYGLHKARKAPQYSKR. Basic residues predominate over residues 118–137; sequence KERKKYGLHKARKAPQYSKR.

This sequence belongs to the universal ribosomal protein uS9 family.

This chain is Small ribosomal subunit protein uS9, found in Gloeothece citriformis (strain PCC 7424) (Cyanothece sp. (strain PCC 7424)).